A 528-amino-acid chain; its full sequence is Acid-sensing ion channel 1 (528 aa).

Residues Met1 to Cys49 are Cytoplasmic-facing. The chain crosses the membrane as a helical span at residues Phe50 to Gln66. At Tyr67 to Glu427 the chain is on the extracellular side. Cystine bridges form between Cys93–Cys194, Cys172–Cys179, Cys290–Cys367, Cys310–Cys363, Cys314–Cys361, Cys323–Cys345, and Cys325–Cys337. Residues Asn368 and Asn395 are each glycosylated (N-linked (GlcNAc...) asparagine). The discontinuously helical transmembrane segment at Ile428 to Tyr458 threads the bilayer. Residues Gly444–Ser446 carry the GAS motif; ion selectivity filter motif. Over Glu459–Cys528 the chain is Cytoplasmic. A Phosphoserine; by PKA modification is found at Ser479. At Ser499 the chain carries Phosphoserine.

This sequence belongs to the amiloride-sensitive sodium channel (TC 1.A.6) family. ASIC1 subfamily. Forms functional homotrimeric channels. Forms heterotrimers with other ASIC proteins, resulting in channels with distinct properties. Interacts with PICK1; regulates ASIC1 clustering in membranes. Interacts with STOM; alters heterotrimeric channels activity. Post-translationally, pH-gating could be regulated by serine proteases. Phosphorylation by PKA regulates interaction with PICK1 and subcellular localization. Phosphorylation by PKC may regulate the channel. As to expression, expressed in neurons throughout the central and peripheral nervous system.

It localises to the cell membrane. The protein localises to the postsynaptic cell membrane. Its subcellular location is the cell projection. It is found in the dendrite. It catalyses the reaction Na(+)(in) = Na(+)(out). The enzyme catalyses K(+)(in) = K(+)(out). It carries out the reaction Li(+)(in) = Li(+)(out). The catalysed reaction is Ca(2+)(in) = Ca(2+)(out). With respect to regulation, potentiated by FMRFamide-related neuropeptides, which are induced during inflammation and modulate pain responses. Inhibited by the diuretic drug amiloride. Spider venom psalmotoxin-1 inhibits the channel by locking it in its desensitized conformation. The homotrimeric channel is inhibited by the spider venom pi-theraphotoxin-Hm3a. Homotrimeric and heterotrimeric (with ASIC2 isoform 1) channels are inhibited by the snake venom mambalgin-1, which prevents proton-induced transitions from the resting closed state to the active and/or desensitized states. Inhibited by Texas coral snake toxin MitTx1. Functionally, forms voltage-independent, pH-gated trimeric sodium channels that act as postsynaptic excitatory receptors in the nervous system, playing a crucial role in regulating synaptic plasticity, learning, and memory. Upon extracellular pH drop this channel elicits transient, fast activating, and completely desensitizing inward currents. Displays high selectivity for sodium ions but can also permit the permeation of other cations. Regulates more or less directly intracellular calcium concentration and CaMKII phosphorylation, and thereby the density of dendritic spines. Modulates neuronal activity in the circuits underlying innate fear. In terms of biological role, has high selectivity for sodium ions, but can also be permeable to other cations including calcium, lithium and potassium. Its function is as follows. Produces acid activated currents with a reduced amplitude and inactivates faster. Has high selectivity for sodium ions but also supports a calcium-mediated current which is sustained and maintained as long as acidic conditions are present. Also potentially permeable to lithium and potassium. Has no measurable proton-gated sodium channel activity in vitro. The polypeptide is Acid-sensing ion channel 1 (Homo sapiens (Human)).